Reading from the N-terminus, the 498-residue chain is Tryptophan decarboxylase TDC2 (498 aa).

An N6-(pyridoxal phosphate)lysine modification is found at K316.

It belongs to the group II decarboxylase family. Pyridoxal 5'-phosphate is required as a cofactor.

The enzyme catalyses L-tryptophan + H(+) = tryptamine + CO2. Involved in the biosynthesis of tryptamine. Supplies tryptamine for the indole moiety of camptothecin (CPT), an anti-cancer monoterpene alkaloid. Represents a key step in monoterpene indole alkaloid biosynthesis. Is specific for tryptophan, and inactive against tyrosine, phenylalanine and 3,4-dihydroxyphenylalanine (dopa). The chain is Tryptophan decarboxylase TDC2 from Camptotheca acuminata (Happy tree).